Here is a 365-residue protein sequence, read N- to C-terminus: Peptide chain release factor 2 (365 aa).

Gln-252 bears the N5-methylglutamine mark.

The protein belongs to the prokaryotic/mitochondrial release factor family. Post-translationally, methylated by PrmC. Methylation increases the termination efficiency of RF2.

The protein localises to the cytoplasm. Its function is as follows. Peptide chain release factor 2 directs the termination of translation in response to the peptide chain termination codons UGA and UAA. The protein is Peptide chain release factor 2 of Yersinia pseudotuberculosis serotype O:1b (strain IP 31758).